Here is a 72-residue protein sequence, read N- to C-terminus: Disintegrin sasaimin (72 aa).

Residues 1–72 (EAGEECDCGA…SAGCPRNPFH (72 aa)) enclose the Disintegrin domain. Intrachain disulfides connect C6-C21, C8-C16, C15-C38, C29-C35, C34-C59, and C47-C66. The Cell attachment site motif lies at 51-53 (RGD).

It belongs to the venom metalloproteinase (M12B) family. P-II subfamily. P-IIa sub-subfamily. As to quaternary structure, monomer. In terms of tissue distribution, expressed by the venom gland.

It is found in the secreted. Its function is as follows. Inhibits ADP- (IC(50)=66 nM) and collagen-induced (IC(50)=100 nM) aggregation of human platelets. In vitro, inhibits adhesion of endothelial cells to vitronectin, type-I collagen and, to a lower degree, fibronectin and laminin. The sequence is that of Disintegrin sasaimin from Cerrophidion sasai (Costa Rica montane pitviper).